The following is a 121-amino-acid chain: Large ribosomal subunit protein eL8 (121 aa).

Belongs to the eukaryotic ribosomal protein eL8 family. As to quaternary structure, part of the 50S ribosomal subunit. Probably part of the RNase P complex.

It is found in the cytoplasm. In terms of biological role, multifunctional RNA-binding protein that recognizes the K-turn motif in ribosomal RNA, the RNA component of RNase P, box H/ACA, box C/D and box C'/D' sRNAs. The sequence is that of Large ribosomal subunit protein eL8 from Thermoplasma volcanium (strain ATCC 51530 / DSM 4299 / JCM 9571 / NBRC 15438 / GSS1).